The primary structure comprises 734 residues: Photosystem I P700 chlorophyll a apoprotein A2 (734 aa).

Transmembrane regions (helical) follow at residues 46-69 (IFAS…FHVA), 135-158 (LYTG…LHLQ), 175-199 (LNHH…HVAI), 273-291 (MAHH…GHMY), 330-353 (IHFQ…QHMY), 369-395 (AALY…IFFI), 417-439 (AIIS…LYVH), and 517-535 (FLVH…LILV). 2 residues coordinate [4Fe-4S] cluster: cysteine 559 and cysteine 568. Helical transmembrane passes span 575-596 (AFYL…YWHW) and 643-665 (LSVW…MFLI). Chlorophyll a-binding residues include histidine 654, methionine 662, and tyrosine 670. Tryptophan 671 lines the phylloquinone pocket. Residues 707–727 (LVGLAHFSVGYIFTYAAFLIA) traverse the membrane as a helical segment.

It belongs to the PsaA/PsaB family. As to quaternary structure, the PsaA/B heterodimer binds the P700 chlorophyll special pair and subsequent electron acceptors. PSI consists of a core antenna complex that captures photons, and an electron transfer chain that converts photonic excitation into a charge separation. The eukaryotic PSI reaction center is composed of at least 11 subunits. P700 is a chlorophyll a/chlorophyll a' dimer, A0 is one or more chlorophyll a, A1 is one or both phylloquinones and FX is a shared 4Fe-4S iron-sulfur center. serves as cofactor.

The protein resides in the plastid. It localises to the chloroplast thylakoid membrane. The enzyme catalyses reduced [plastocyanin] + hnu + oxidized [2Fe-2S]-[ferredoxin] = oxidized [plastocyanin] + reduced [2Fe-2S]-[ferredoxin]. Its function is as follows. PsaA and PsaB bind P700, the primary electron donor of photosystem I (PSI), as well as the electron acceptors A0, A1 and FX. PSI is a plastocyanin-ferredoxin oxidoreductase, converting photonic excitation into a charge separation, which transfers an electron from the donor P700 chlorophyll pair to the spectroscopically characterized acceptors A0, A1, FX, FA and FB in turn. Oxidized P700 is reduced on the lumenal side of the thylakoid membrane by plastocyanin. This is Photosystem I P700 chlorophyll a apoprotein A2 from Triticum aestivum (Wheat).